A 142-amino-acid polypeptide reads, in one-letter code: MEKEKLKKKLSLLAYRVTQENGTEAPFANEFDDFFEQGLYVDVVSGEALFTSLDKYQSGCGWPAFTQPIDKGVVKEKRDKSLFMERTEVRSSNADSHLGHVFTDGPLDKGDLRYCINSAALRFVPFDQLEAEGYGEYVKYFS.

The region spanning 3–126 is the MsrB domain; the sequence is KEKLKKKLSL…NSAALRFVPF (124 aa). The active-site Nucleophile is Cys115.

It belongs to the MsrB Met sulfoxide reductase family.

The enzyme catalyses L-methionyl-[protein] + [thioredoxin]-disulfide + H2O = L-methionyl-(R)-S-oxide-[protein] + [thioredoxin]-dithiol. This Lactococcus lactis subsp. lactis (strain IL1403) (Streptococcus lactis) protein is Peptide methionine sulfoxide reductase MsrB.